Here is a 1378-residue protein sequence, read N- to C-terminus: DNA-directed RNA polymerase subunit beta (1378 aa).

It belongs to the RNA polymerase beta chain family. The RNAP catalytic core consists of 2 alpha, 1 beta, 1 beta' and 1 omega subunit. When a sigma factor is associated with the core the holoenzyme is formed, which can initiate transcription.

It catalyses the reaction RNA(n) + a ribonucleoside 5'-triphosphate = RNA(n+1) + diphosphate. In terms of biological role, DNA-dependent RNA polymerase catalyzes the transcription of DNA into RNA using the four ribonucleoside triphosphates as substrates. The sequence is that of DNA-directed RNA polymerase subunit beta from Ruegeria pomeroyi (strain ATCC 700808 / DSM 15171 / DSS-3) (Silicibacter pomeroyi).